Reading from the N-terminus, the 262-residue chain is uncharacterized protein (262 aa).

A run of 6 helical transmembrane segments spans residues 7-27 (LAVA…LAHM), 58-78 (DTLG…IVFG), 114-134 (FLAF…VLGG), 140-160 (GGFQ…IAFG), 179-199 (GALG…YYLF), and 216-236 (IITA…VLAG).

Its subcellular location is the cell membrane. This is an uncharacterized protein from Methanocaldococcus jannaschii (strain ATCC 43067 / DSM 2661 / JAL-1 / JCM 10045 / NBRC 100440) (Methanococcus jannaschii).